The primary structure comprises 56 residues: Large ribosomal subunit protein eL37 (56 aa).

Zn(2+)-binding residues include Cys19, Cys22, Cys34, and Cys37. The segment at 19-37 (CRRCGSVSLNIHTKQCTSC) adopts a C4-type zinc-finger fold.

The protein belongs to the eukaryotic ribosomal protein eL37 family. It depends on Zn(2+) as a cofactor.

Its function is as follows. Binds to the 23S rRNA. The polypeptide is Large ribosomal subunit protein eL37 (Methanococcoides burtonii (strain DSM 6242 / NBRC 107633 / OCM 468 / ACE-M)).